A 4652-amino-acid chain; its full sequence is MERWAAAAACTLLLAFAACLAPASGRECLGNEFRCSNGHCITESWRCDGTRDCLDGSDEIGCPPSTCGSTQFHCENEDVCIPLYWVCDGEEDCSNGADEHQRCPPGRTCSSHHFTCTNGECIPVEYRCDHSTDCLDGTDEINCRYPVCQQQTCHNGACYNTSQRCDGEIDCRDASDELNCTQRCLRNEFQCGSGECIPRDYVCDHDPDCSDSSDEHSCSVYQPCKGNEFACSNGFCINQNWVCDGMADCLDNSDEDGCESSIIRTHECYPNEWACPEDGKCIPLSRVCDGIADCPRGGDENKQGRVCDVNMCPSLGCEYQCHKSPSGGTCNCPPGFIVNKNNTRSCVDFNDCQIWGICDHFCEDRIGHHQCFCAEGYVLEHEQHCRANSSSGQAFVIFSNGRNLLLGDIQGQSFEYLVRSQNRGSPVGVDFHYRLSKVFWTDTMQNKVFSLDIDGLVIREVLSVSIEDPENLAVDWINNKLYIVETNVNRIDLANLDGSHRITLITENLGRPRGIALDPTVGYLFFSDWQSISGQPKIERAYMDGSNRKDLVKIKLGWPGGITLDLVAKRVYWVDARFDYIETVTYDGTQRKTVLQGGSNIPHPFGITLFEDNLFFTDWTKFSVMKANKFTETNPRVYFRSSTRPFGVTVYHAIRQPSVRNPCGNNNGGCEHICVLSHRTDNGGLGYRCKCKLGYIPGLDDYSCVATKQFLFFSTDVAVRGIPLTPSNQKDVILPVTGSPSVFVGIDFDAKENAIFFSDTSKDMIFRQKINGTGREIITANRVPSVESLSFDWISRNLYWTDASYRSVTVMRLADKSRRTIVQNLNNPRSIVVHPIAGYIFFTDWFRPAKILRAWSDGSHMLPIVNTTLGWPNGLAIDWGSSRLYWVDAFLDKIEHTTFDGLDRRALNHLQQMTHPFGLTVFGEYVYFTDWRQRSIVRVRKTDGGEMTILRNGVGNVMRVKIFETSIQVGSNACNRPTNPNGDCSHFCFPVPNLQRVCGCPYGMRLASNRLNCVNDSSREPPMEQCGALSFPCNNGRCVPLHYRCDGVDDCHDNSDEVQCGAFNTSCAPSAFACGHGGGECIPSYWRCDNHNDCVDGSDEQNCSSQAQTSCRADYFTCDNHMCIPKNWLCDTDNDCGDGSDEKRCDLGETCSPTQFHCPNHRCIDLAFVCDGDKDCADGSDESACVINCTDSQFKCVGSNKCISNTYRCDGVSDCSDHSDEIDCPTRPPGMCRQDEFQCREDGICIPDSWECDGHPDCLTGSDEHSGCPPRTCPXSRFLCANGNCIFRDWLCDGDNDCRDMSDEKDCPTQPFLCPSWQWQCPGHSICVNLSSVCDGISDCPHGTDESPLCNQESCLHSNGGCTHLCIQGPFGAQCECPLGYRLANDSKTCEDIDECRIPGFCSQHCYNMRGSFRCWCDIEYSLEADQRTCKATASESLLLVVANQNQLIADNITKSMDHMRALIQDGSHIVAVDFDSVRGRIFWSDKTLGKIFSAFQNGTDRKPVFNSGNIMTESIAVDWVGRNLYWADFALETIEVSKLDGTLRTVLLSENVTSPRGIVLDPRVNDRVIFWTNWGSYPRIERASMDGEMRTVIVQQKIFWPNGLAIDYPTRLLYFADGNLDHIHFCKYDGSNRKQVISSGEGSGHLFAITIFEDSIYWTDRNSQDVRKANKWHGGNESVVLSASQPLGIVAVHPARQPTARNPCTIARCSHLCLLSSERLYSCACPSGWSLSQDSMTCVRDDDAFLIVVRRTTIFGISLNPEVNTDNAMVPISGMESGYDVEVDYSEQFLYYADYPGEIYKVKTDGTNRTLFDPLTKVGSTTTLALDWLSRNLYYTDSEARSIKVLTLRGNVRYRKTLITNDGTTLGIGVPVSITVDPAKGKLYWSDLGIEGRVPAKIACANMDGTSRKNLFTGHLENVGFITLDIQEQKLYWTVRSYISIERGNVDGTDRMSLVNSLPRPRGIAVYGPYLYYADEQNQVIERVDKATGANKVVVREGLPNLRALRIYRRRGSESSNGCSNNINACQQICLPVPGGLFTCACAVGFKLNPDNRTCSSHDSFIVVSMLTAIRGYSLDVSDHSEAMVPVELEGQNTLHVDVDVSSGFVYWADFNRNVQTDNAIRRIKIDGSGFADIITDGIGKDGIRGIAVDWVAGNLYFINAFVSETLIEVLRINTTHRRVLLKTTEDVPRDIVVDPKNRYLFWSDIGQTPKIERSFLDCTNRTVLVSEMVASPRGLALDHNSGYIYWVDDSLDLIARVSIHGGNSETIRFGSSYPTPYAIAVFGNSIIWVDRDLKTIFQASKEPFKTDPPTVIRNNINWLRDVTVFDKQAQPRSPAEVNYNPCLQNNGGCTHFCFALPQLRTPKCGCAFGVLQGDGRSCAISREDFLIYALDNSVRSLHFDPEDYNVPFTAISVEETAVAVDYDSIDNRIYFTQVLASGKGQISYISLNSRSHSPTVVISNLGSPDGIAFDWIGRRIYYSDYTNQTIQSMNMDGSRRTVVARVTKPRAIVLDPCQGYMYWTDWSTNAQIERATMAGNFRNSIVNRDLVWPNGLTLDYKENLLYWADASLQKIERSSVTGTGREVIVSRANAPFGLTVYGQYIYWTDWLTQKIYRANKYDGSGQTAMTTALPFLPNGIRAVVNNQELCHNPCGRFNGGCSHVCAPGPNGPECKCPHEGRWYLANNNKYCIVDDGKRCNSTQFTCLSGYCILESLKCNDIDECGDSSDELETLCAYHTCPPTSFTCANGRCIQRHFRCDHYNDCGDNSDESGCRFRSCNITTEFSCNNGKCLPLQLVCDGIDHCNDNNTSDEKNCAQHTCLPDYIKCANSNVCIPRLFLCDGDNDCGDMSDENPIYCVSPTCKNNEFQCTSGSCIPELWHCDGERDCDDGSDEPATCVYSPSTCSSDEFKCDNNRCIQMEWICDGDNDCGDMSDEDGRHHCENHNCSSYAFHCVNSAPPSRRCIPLSWVCDGDADCSDAYDEHQNCTRRNCSGTEFRCSNGLCIPNWFRCDRRNDCGDYSDERNCKYPACDENLFTCQNGICTYKSYICDGENDCGDNSDELEHLCHKEETTCPPHQFRCNNGNCIEMVKVCNHQADCSDNSDEERCGVNECNDPLLSGCDQNCTDTLTSFYCSCKPGYRLLPDKRTCVDIDECKETPSVCSQKCENLLGSYICKCAPGYTREPDGRSCRQNTNIEPYLIFSNRYYLRNLTIDGHIYSLILQGLGNAVALDFDRVEERLYWLDIENKVIERMFLNKTNREAVIKYNIPGTESLAVDWVTRKLYWSDSYLNCLSVSDLNGRYRRKLAEHCVDVNNTFCFDKPRGIALHPRYGYVYWADWTDRAYIGRVGMDGRNKSLIISSKIKWPNGITIDYTNDLLYWTDAHLGYIEYSDLEGSHRHTVYETGTLSHPFAVTIFEDTIYWTDWNTKTVEKGNKYNGSNREVLVNTTHRPYDIHVYHPYRQPFVSNPCGTNNGGCSHLCLIKAGGNGFTCECPDNFYTIQHGDTTQCLPMCSSTQFLCANNEMCIPIWWKCDGQKDCLDGSDEPNTCPQRFCRLGQFQCSDGNCTSSNFICNARQDCPDGSDEDAVLCEHHRCESNQWQCANKRCIPESWQCDSLNDCGDNSDEDSSHCARRTCLPGYFKCANGHCIPQSWKCDVDNDCGDYSDEPLQECMGPAYRCDNYTEFDCKTNYRCIPKWAVCNGFDDCRDNSDEQNCESLTCKPSGEFRCTNHHCIPLRWRCDGHNDCGDNSDEENCVPRQCSESEFRCDDQTCIPSRWICDQNNDCGDNSDERDCEVMTCHPGYFQCSSGHCIPDQMRCDGFADCLDASDEATCPTRFPNGAYCPATLFECKNHVCVQPSWKCDGDNDCGDGSDEELHLCLNITCDLTNRFRCDNNRCIYRHELCNHEDDCGDGSDEKKENCLAPTPRPCTEGEFKCSNGHCISQHLVCDDVDDCGDHFDETGCNTGEERSCAENLCEHNCTQLIGGGFICSCRPGFKASSLNRNSCEDINECEQFGVCPQNCHNTKGSYECTCAEGFRSMSEHYGERCAAEGNPPLLLLPENVRVRKYNLSSEKFSDYLEDQERIQALDYDWDPEGTGLSVVYYTVLGHGSKFGAIKRAYIPNFESGSNNPVKEVNLGLKYIVQPDGIAVDWVGRHIYWSDAKTQRIEVAELDGRYRKWLITTLLDQPAAIVVNPKQGLMYWTDWGKNPKIEIAWMDGQHRKVLVQEDLGWPTGLSIDYVNSDRIYWSDLKEDVIETIKHDGTDRKVVVTAAMNPYSLDIFESQLYWISKDKGEIWVQDKFERDRKEKLLIVNPWLTQVRIFHQRRYNQSVPNRCKKVCSHLCLLKPEGYTCACPQGSRFIAGSVTECDAAIESPVTMPPPCRCMNEGNCYFDKNNLPKCKCPSGYMGEYCEIGLSKGISPGTTVAVLVTLILIIIIGGLVALGFFHYRKTGSILISMPRLPSLSNLSKYTENGNGVTFRSGEDVNMDIGVSGFGPESAIDRSMAMSEHFAMDLEKPPIIFENPMYTSKDGTIRMAQPTTTQVSESGNVYNKNYGSPVNPDELAPDTKPASPSADETQVTKWNIFKRKPKQNTNFENPIYAETENEPKVGAAVTPPPSPSPPAKKTQKKGTTPAYSATEDTFKDTANLVREDSEA.

The first 25 residues, 1–25 (MERWAAAAACTLLLAFAACLAPASG), serve as a signal peptide directing secretion. Residues 26 to 4422 (RECLGNEFRC…SKGISPGTTV (4397 aa)) are Extracellular-facing. LDL-receptor class A domains are found at residues 27 to 63 (ECLG…IGCP), 66 to 104 (TCGS…QRCP), 108 to 144 (TCSS…INCR), 142 to 181 (NCRY…LNCT), 183 to 219 (RCLR…HSCS), 223 to 259 (PCKG…DGCE), and 267 to 308 (ECYP…RVCD). 21 disulfide bridges follow: C28–C40, C35–C53, C47–C62, C67–C80, C74–C93, C87–C103, C109–C121, C116–C134, C128–C143, C143–C158, C153–C171, C165–C180, C184–C196, C191–C209, C203–C218, C224–C236, C231–C249, C243–C258, C268–C281, C275–C294, and C288–C307. 2 N-linked (GlcNAc...) asparagine glycosylation sites follow: N160 and N179. The N-linked (GlcNAc...) asparagine glycan is linked to N341. Residues 348 to 386 (DFNDCQIWGICDHFCEDRIGHHQCFCAEGYVLEHEQHCR) form the EGF-like 1; calcium-binding domain. 3 disulfides stabilise this stretch: C352–C362, C358–C371, and C373–C385. The N-linked (GlcNAc...) asparagine glycan is linked to N388. 8 LDL-receptor class B repeats span residues 436-478 (SKVF…DWIN), 479-521 (NKLY…DPTV), 522-568 (GYLF…DLVA), 569-613 (KRVY…FEDN), 753-795 (NAIF…DWIS), 796-837 (RNLY…HPIA), 838-881 (GYIF…DWGS), and 882-925 (SRLY…FGEY). Residue N771 is glycosylated (N-linked (GlcNAc...) asparagine). N866 is a glycosylation site (N-linked (GlcNAc...) asparagine). The N-linked (GlcNAc...) asparagine glycan is linked to N1015. One can recognise an LDL-receptor class A 8 domain in the interval 1025-1061 (QCGALSFPCNNGRCVPLHYRCDGVDDCHDNSDEVQCG). Disulfide bonds link C1026–C1038, C1033–C1051, and C1045–C1060. N1064 carries an N-linked (GlcNAc...) asparagine glycan. 7 LDL-receptor class A domains span residues 1066–1104 (SCAP…QNCS), 1110–1146 (SCRA…KRCD), 1150–1186 (TCSP…SACV), 1188–1225 (NCTD…IDCP), 1231–1269 (MCRQ…SGCP), 1272–1308 (TCPX…KDCP), and 1313–1351 (LCPS…PLCN). 9 disulfides stabilise this stretch: C1067–C1081, C1074–C1094, C1088–C1103, C1111–C1123, C1118–C1136, C1130–C1145, C1151–C1163, C1158–C1176, and C1170–C1185. N1102 carries N-linked (GlcNAc...) asparagine glycosylation. W1128, D1131, D1133, D1135, D1141, and E1142 together coordinate Ca(2+). The N-linked (GlcNAc...) asparagine glycan is linked to N1188. Disulfide bonds link C1189–C1202, C1196–C1215, C1209–C1224, C1232–C1245, C1239–C1258, C1252–C1268, C1273–C1285, C1280–C1298, C1292–C1307, C1314–C1327, C1321–C1340, and C1334–C1350. Ca(2+) is bound by residues Y1207, D1210, V1212, D1214, D1220, and E1221. The N-linked (GlcNAc...) asparagine glycan is linked to N1329. 4 N-linked (GlcNAc...) asparagine glycosylation sites follow: N1385, N1452, N1498, and N1552. LDL-receptor class B repeat units follow at residues 1480–1522 (GRIF…DWVG), 1523–1565 (RNLY…DPRV), 1568–1611 (RVIF…DYPT), 1612–1654 (RLLY…TIFE), 1655–1696 (DSIY…VHPA), 1789–1831 (QFLY…DWLS), 1832–1881 (RNLY…DPAK), 1882–1929 (GKLY…DIQE), 1930–1971 (QKLY…YGPY), and 1972–2012 (LYYA…YRRR). N1677 and N1809 each carry an N-linked (GlcNAc...) asparagine glycan. N2053 is a glycosylation site (N-linked (GlcNAc...) asparagine). LDL-receptor class B repeat units follow at residues 2105–2154 (GFVY…DWVA), 2155–2199 (GNLY…DPKN), 2200–2243 (RYLF…DHNS), 2244–2287 (GYIY…FGNS), 2429–2475 (NRIY…DWIG), 2476–2516 (RRIY…DPCQ), 2517–2560 (GYMY…DYKE), 2561–2602 (NLLY…YGQY), and 2603–2644 (IYWT…VVNN). Residues N2175 and N2222 are each glycosylated (N-linked (GlcNAc...) asparagine). N2485 carries N-linked (GlcNAc...) asparagine glycosylation. LDL-receptor class A domains are found at residues 2696-2734 (RCNS…TLCA), 2737-2773 (TCPP…SGCR), 2776-2815 (SCNI…KNCA), 2818-2857 (TCLP…IYCV), 2860-2897 (TCKN…ATCV), 2902-2941 (TCSS…HHCE), 2944-2986 (NCSS…QNCT), 2989-3025 (NCSG…RNCK), 3028-3066 (ACDE…HLCH), and 3071-3107 (TCPP…ERCG). Disulfide bonds link C2697–C2709, C2704–C2722, C2716–C2733, C2738–C2750, C2745–C2763, C2757–C2772, C2777–C2790, C2785–C2803, C2797–C2814, C2819–C2832, C2826–C2845, C2839–C2856, C2861–C2873, C2868–C2886, C2880–C2896, C2903–C2915, C2910–C2928, and C2922–C2940. An N-linked (GlcNAc...) asparagine glycan is attached at N2698. N2778 is a glycosylation site (N-linked (GlcNAc...) asparagine). N2806 and N2807 each carry an N-linked (GlcNAc...) asparagine glycan. N2944 is a glycosylation site (N-linked (GlcNAc...) asparagine). Cystine bridges form between C2945/C2962, C2952/C2975, and C2969/C2985. 2 N-linked (GlcNAc...) asparagine glycosylation sites follow: N2984 and N2989. 9 disulfide bridges follow: C2990/C3002, C2997/C3015, C3009/C3024, C3029/C3041, C3036/C3054, C3048/C3065, C3072/C3084, C3079/C3097, and C3091/C3106. N3122 is a glycosylation site (N-linked (GlcNAc...) asparagine). The EGF-like 2; calcium-binding domain occupies 3149-3189 (DIDECKETPSVCSQKCENLLGSYICKCAPGYTREPDGRSCR). Intrachain disulfides connect C3153–C3164, C3160–C3173, and C3175–C3188. 4 N-linked (GlcNAc...) asparagine glycosylation sites follow: N3208, N3254, N3312, and N3352. LDL-receptor class B repeat units lie at residues 3236-3278 (ERLY…DWVT), 3279-3321 (RKLY…DKPR), 3330-3373 (GYVY…DYTN), 3374-3417 (DLLY…FEDT), and 3418-3458 (IYWT…YHPY). N-linked (GlcNAc...) asparagine glycans are attached at residues N3435 and N3444. LDL-receptor class A domains follow at residues 3509-3547 (MCSS…NTCP), 3550-3588 (FCRL…VLCE), 3591-3629 (RCES…SHCA), 3632-3670 (TCLP…QECM), 3675-3713 (RCDN…QNCE), 3716-3753 (TCKP…ENCV), 3756-3792 (QCSE…RDCE), 3795-3831 (TCHP…ATCP), and 3839-3877 (YCPA…HLCL). Cystine bridges form between C3510–C3523, C3517–C3536, C3530–C3546, C3551–C3563, C3558–C3576, C3570–C3587, C3592–C3604, C3599–C3617, C3611–C3628, C3633–C3645, C3640–C3658, C3652–C3669, C3676–C3690, C3684–C3703, C3697–C3712, C3717–C3730, C3725–C3743, C3737–C3752, C3757–C3769, C3764–C3782, C3776–C3791, C3796–C3808, C3803–C3821, C3815–C3830, C3840–C3852, C3847–C3865, and C3859–C3876. N3562 carries N-linked (GlcNAc...) asparagine glycosylation. N3678 is a glycosylation site (N-linked (GlcNAc...) asparagine). N3878 carries an N-linked (GlcNAc...) asparagine glycan. 2 consecutive LDL-receptor class A domains span residues 3880-3919 (TCDL…ENCL) and 3925-3961 (PCTE…TGCN). 12 disulfide bridges follow: C3881/C3894, C3889/C3907, C3901/C3918, C3926/C3938, C3933/C3951, C3945/C3960, C3968/C3977, C3973/C3987, C3989/C4003, C4009/C4019, C4015/C4028, and C4030/C4045. The 41-residue stretch at 3964–4004 (EERSCAENLCEHNCTQLIGGGFICSCRPGFKASSLNRNSCE) folds into the EGF-like 3 domain. N3976 carries an N-linked (GlcNAc...) asparagine glycan. An EGF-like 4; calcium-binding domain is found at 4005-4046 (DINECEQFGVCPQNCHNTKGSYECTCAEGFRSMSEHYGERCA). The N-linked (GlcNAc...) asparagine glycan is linked to N4066. 3 LDL-receptor class B repeats span residues 4152–4194 (RHIY…NPKQ), 4195–4238 (GLMY…DYVN), and 4240–4281 (DRIY…FESQ). An N-linked (GlcNAc...) asparagine glycan is attached at N4325. The region spanning 4375–4409 (MPPPCRCMNEGNCYFDKNNLPKCKCPSGYMGEYCE) is the EGF-like 5 domain. 3 disulfide bridges follow: C4379–C4387, C4381–C4397, and C4399–C4408. A helical membrane pass occupies residues 4423-4443 (AVLVTLILIIIIGGLVALGFF). The Cytoplasmic segment spans residues 4444-4652 (HYRKTGSILI…ANLVREDSEA (209 aa)). An SH3-binding motif is present at residues 4450 to 4459 (SILISMPRLP). A PxLPxI/L motif 1; mediates interaction with ANKRA2 motif is present at residues 4453–4458 (ISMPRL). Positions 4456-4461 (PRLPSL) match the PxLPxI/L motif 2; mediates interaction with ANKRA2 motif. Position 4460 is a phosphoserine (S4460). The Endocytosis signal signature appears at 4518 to 4523 (FENPMY). Residues 4536 to 4553 (TTTQVSESGNVYNKNYGS) show a composition bias toward polar residues. The disordered stretch occupies residues 4536–4652 (TTTQVSESGN…ANLVREDSEA (117 aa)). Position 4568 is a phosphoserine (S4568). The interval 4588 to 4601 (QNTNFENPIYAETE) is interaction with DAB2. Residues 4594-4597 (NPIY) carry the NPXY motif motif. Residues 4597 to 4600 (YAET) carry the SH2-binding motif. An SH3-binding motif is present at residues 4610–4621 (VTPPPSPSPPAK). S4615 is modified (phosphoserine). Over residues 4626–4636 (KGTTPAYSATE) the composition is skewed to polar residues. Position 4629 is a phosphothreonine (T4629). S4650 is modified (phosphoserine).

The protein belongs to the LDLR family. As to quaternary structure, binds plasminogen, extracellular matrix components, plasminogen activator-plasminogen activator inhibitor type I complex, apolipoprotein E-enriched beta-VLDL, lipoprotein lipase, lactoferrin, CLU/clusterin and calcium. Forms a multimeric complex together with LRPAP1. Interacts (via PxLPxI/L motif) with ANKRA2 (via ankyrin repeats). Interacts with LRP2BP. Interacts (via NPXY motif) with DAB2; the interaction is not affected by tyrosine phosphorylation of the NPXY motif. Interacts with MB. Interacts with BMP4. Interacts with the Sonic hedgehog protein N-product which is the active product of SHH. Interacts with CST3 in a calcium-dependent manner. Interacts with the vitamin-D binding protein GC/DBP. Interacts with sex hormone-binding protein SHBG. Interacts with angiotensin-2. Also interacts with angiotensin 1-7. Interacts with APOM. Interacts with selenoprotein SEPP1. Interacts with LEP. Interacts with ALB. Interacts with the antiapoptotic protein BIRC5/survivin. Interacts with matrix metalloproteinase MMP2 in complex with metalloproteinase inhibitor TIMP1. In neurons, forms a trimeric complex with APP and APPB1/FE65. Interacts with LDLRAP1/ARH; mediates trafficking of LRP2 to the endocytic recycling compartment. Does not interact with beta-amyloid protein 40 alone but interacts with the complex composed of beta-amyloid protein 40 and CLU/APOJ. Interacts with MDK. In terms of processing, a fraction undergoes proteolytic cleavage of the extracellular domain at the cell membrane to generate a cytoplasmic tail fragment. This is internalized into the early endosome from where it trafficks in an LDLRAP1/ARH-dependent manner to the endocytic recycling compartment (ERC). In the ERC, it is further cleaved by gamma-secretase to release a fragment which translocates to the nucleus and mediates transcriptional repression. N-glycosylation is required for ligand binding.

The protein localises to the apical cell membrane. It is found in the endosome lumen. The protein resides in the membrane. Its subcellular location is the clathrin-coated pit. It localises to the cell projection. The protein localises to the dendrite. It is found in the axon. Multiligand endocytic receptor. Acts together with CUBN to mediate endocytosis of high-density lipoproteins. Mediates receptor-mediated uptake of polybasic drugs such as aprotinin, aminoglycosides and polymyxin B. In the kidney, mediates the tubular uptake and clearance of leptin. Also mediates transport of leptin across the blood-brain barrier through endocytosis at the choroid plexus epithelium. Endocytosis of leptin in neuronal cells is required for hypothalamic leptin signaling and leptin-mediated regulation of feeding and body weight. Mediates endocytosis and subsequent lysosomal degradation of CST3 in kidney proximal tubule cells. Mediates renal uptake of 25-hydroxyvitamin D3 in complex with the vitamin D3 transporter GC/DBP. Mediates renal uptake of metallothionein-bound heavy metals. Together with CUBN, mediates renal reabsorption of myoglobin. Mediates renal uptake and subsequent lysosomal degradation of APOM. Plays a role in kidney selenium homeostasis by mediating renal endocytosis of selenoprotein SEPP1. Mediates renal uptake of the antiapoptotic protein BIRC5/survivin which may be important for functional integrity of the kidney. Mediates renal uptake of matrix metalloproteinase MMP2 in complex with metalloproteinase inhibitor TIMP1. Mediates endocytosis of Sonic hedgehog protein N-product (ShhN), the active product of SHH. Also mediates ShhN transcytosis. In the embryonic neuroepithelium, mediates endocytic uptake and degradation of BMP4, is required for correct SHH localization in the ventral neural tube and plays a role in patterning of the ventral telencephalon. Required at the onset of neurulation to sequester SHH on the apical surface of neuroepithelial cells of the rostral diencephalon ventral midline and to control PTCH1-dependent uptake and intracellular trafficking of SHH. During neurulation, required in neuroepithelial cells for uptake of folate bound to the folate receptor FOLR1 which is necessary for neural tube closure. In the adult brain, negatively regulates BMP signaling in the subependymal zone which enables neurogenesis to proceed. In astrocytes, mediates endocytosis of ALB which is required for the synthesis of the neurotrophic factor oleic acid. Involved in neurite branching. During optic nerve development, required for SHH-mediated migration and proliferation of oligodendrocyte precursor cells. Mediates endocytic uptake and clearance of SHH in the retinal margin which protects retinal progenitor cells from mitogenic stimuli and keeps them quiescent. Plays a role in reproductive organ development by mediating uptake in reproductive tissues of androgen and estrogen bound to the sex hormone binding protein SHBG. Mediates endocytosis of angiotensin-2. Also mediates endocytosis of angiotensis 1-7. Binds to the complex composed of beta-amyloid protein 40 and CLU/APOJ and mediates its endocytosis and lysosomal degradation. Required for embryonic heart development. Required for normal hearing, possibly through interaction with estrogen in the inner ear. This Sus scrofa (Pig) protein is Low-density lipoprotein receptor-related protein 2.